A 292-amino-acid polypeptide reads, in one-letter code: Complex I assembly factor TIMMDC1, mitochondrial (292 aa).

2 helical membrane passes run 146–168 (WSWRVAAFVTLFNTVNTGLTVYR) and 195–215 (GLLSGTIIGVILGFPAGVLIL).

This sequence belongs to the Tim17/Tim22/Tim23 family. As to quaternary structure, associates with the intermediate 315 kDa subcomplex of incompletely assembled complex I.

It is found in the mitochondrion membrane. In terms of biological role, chaperone protein involved in the assembly of the mitochondrial NADH:ubiquinone oxidoreductase complex (complex I). Participates in constructing the membrane arm of complex I. The polypeptide is Complex I assembly factor TIMMDC1, mitochondrial (timmdc1) (Danio rerio (Zebrafish)).